The primary structure comprises 103 residues: MAKESIIFVGLFTAILSAAILLVSCAGNDQSLSQYVKIKVQDGDTLWSLADHVAEKKHINKEDFIEWVTENNHLQTADIKPGDELILPVKKKHPAVYQLAIVN.

Residues 36–87 form the LysM domain; the sequence is VKIKVQDGDTLWSLADHVAEKKHINKEDFIEWVTENNHLQTADIKPGDELIL.

This sequence belongs to the YneA family.

The protein resides in the cytoplasm. Its function is as follows. Inhibits cell division during the SOS response. Affects a later stage of the cell division protein assembly, after the assembly of the Z ring, by probably suppressing recruitment of FtsL and/or DivIC to the division machinery. In Bacillus velezensis (strain DSM 23117 / BGSC 10A6 / LMG 26770 / FZB42) (Bacillus amyloliquefaciens subsp. plantarum), this protein is Cell division suppressor protein YneA.